The chain runs to 414 residues: Enolase (414 aa).

Residue Q162 coordinates (2R)-2-phosphoglycerate. The Proton donor role is filled by E204. Residues D239, E280, and D307 each contribute to the Mg(2+) site. Positions 332, 361, 362, and 383 each coordinate (2R)-2-phosphoglycerate. K332 acts as the Proton acceptor in catalysis.

Belongs to the enolase family. Mg(2+) is required as a cofactor.

It localises to the cytoplasm. Its subcellular location is the secreted. The protein localises to the cell surface. The enzyme catalyses (2R)-2-phosphoglycerate = phosphoenolpyruvate + H2O. It functions in the pathway carbohydrate degradation; glycolysis; pyruvate from D-glyceraldehyde 3-phosphate: step 4/5. In terms of biological role, catalyzes the reversible conversion of 2-phosphoglycerate (2-PG) into phosphoenolpyruvate (PEP). It is essential for the degradation of carbohydrates via glycolysis. The sequence is that of Enolase from Campylobacter jejuni subsp. doylei (strain ATCC BAA-1458 / RM4099 / 269.97).